The chain runs to 177 residues: Peptidyl-tRNA hydrolase (177 aa).

Tyr-18 contributes to the tRNA binding site. His-23 (proton acceptor) is an active-site residue. 3 residues coordinate tRNA: Phe-65, Asn-67, and Asn-113.

It belongs to the PTH family. As to quaternary structure, monomer.

The protein resides in the cytoplasm. The catalysed reaction is an N-acyl-L-alpha-aminoacyl-tRNA + H2O = an N-acyl-L-amino acid + a tRNA + H(+). In terms of biological role, hydrolyzes ribosome-free peptidyl-tRNAs (with 1 or more amino acids incorporated), which drop off the ribosome during protein synthesis, or as a result of ribosome stalling. Catalyzes the release of premature peptidyl moieties from peptidyl-tRNA molecules trapped in stalled 50S ribosomal subunits, and thus maintains levels of free tRNAs and 50S ribosomes. The polypeptide is Peptidyl-tRNA hydrolase (Corynebacterium efficiens (strain DSM 44549 / YS-314 / AJ 12310 / JCM 11189 / NBRC 100395)).